A 420-amino-acid polypeptide reads, in one-letter code: Senescence-associated protein SPA15, chloroplastic (420 aa).

The N-terminal 68 residues, 1-68 (MAKPNGIIYS…YIATRGSSLR (68 aa)), are a transit peptide targeting the chloroplast. The disordered stretch occupies residues 85 to 111 (EYRDSSDTSSMQGKDKDPASLGKSGTP).

It belongs to the ATA15/OSA15 family. In terms of tissue distribution, expressed in leaves.

The protein localises to the plastid. It is found in the chloroplast. Functionally, may be involved in the regulation of leaf senescence. In Ipomoea batatas (Sweet potato), this protein is Senescence-associated protein SPA15, chloroplastic.